Reading from the N-terminus, the 178-residue chain is MTHKSVRDYIRTIVDFPHEGILFRDVTTLFADPRGFRIAIDQLLAPYAGMRFDKVAGLEARGFILGGAVAHQLSTGFVPIRKKGKLPGRTISVSYQLEYGEAVVEVHDDAIQAGEKVLLVDDLLATGGTAEAGIKLIEQLGDQVVGCAFVVDLPDLGGRRRLEAMGMEVHALCAFEGL.

This sequence belongs to the purine/pyrimidine phosphoribosyltransferase family. As to quaternary structure, homodimer.

The protein resides in the cytoplasm. It carries out the reaction AMP + diphosphate = 5-phospho-alpha-D-ribose 1-diphosphate + adenine. It participates in purine metabolism; AMP biosynthesis via salvage pathway; AMP from adenine: step 1/1. Functionally, catalyzes a salvage reaction resulting in the formation of AMP, that is energically less costly than de novo synthesis. The protein is Adenine phosphoribosyltransferase of Cereibacter sphaeroides (strain ATCC 17029 / ATH 2.4.9) (Rhodobacter sphaeroides).